A 119-amino-acid chain; its full sequence is Large ribosomal subunit protein bL20 (119 aa).

It belongs to the bacterial ribosomal protein bL20 family.

Functionally, binds directly to 23S ribosomal RNA and is necessary for the in vitro assembly process of the 50S ribosomal subunit. It is not involved in the protein synthesizing functions of that subunit. The chain is Large ribosomal subunit protein bL20 from Nitrosomonas eutropha (strain DSM 101675 / C91 / Nm57).